We begin with the raw amino-acid sequence, 989 residues long: Vacuolar membrane protease (989 aa).

The tract at residues 1–25 is disordered; that stretch reads MDRQSLRTTLRAMDASNENGSAKGA. Topologically, residues 1–41 are cytoplasmic; that stretch reads MDRQSLRTTLRAMDASNENGSAKGAKKTTIGSFVRWTFGFN. Residues 42–62 form a helical membrane-spanning segment; sequence SVPLTTLVTITTVLLGLLVYV. The Vacuolar portion of the chain corresponds to 63–383; that stretch reads STSVNPPDVT…YLFIILPLQY (321 aa). Zn(2+)-binding residues include His-181 and Asp-193. Residue Glu-227 is the Proton acceptor of the active site. Glu-228 is a binding site for Zn(2+). N-linked (GlcNAc...) asparagine glycosylation occurs at Asn-245. Residues Glu-253 and His-325 each contribute to the Zn(2+) site. A helical membrane pass occupies residues 384 to 404; that stretch reads IFVISCLTLAVGPIFVGFLFL. The Cytoplasmic portion of the chain corresponds to 405-426; sequence LVLRKQINAGTSETILGGWLRS. Residues 427–447 traverse the membrane as a helical segment; the sequence is IVSVLVSVVATYFVVETLHLG. Over 448 to 460 the chain is Vacuolar; the sequence is NELYVVRSFYTPL. The helical transmembrane segment at 461 to 481 threads the bilayer; it reads FAGLGTFIFVNYVLLGFFHFV. The Cytoplasmic portion of the chain corresponds to 482-488; it reads RPVCDQK. A helical membrane pass occupies residues 489-509; that stretch reads LIILLELSVVLWVLLLLSVIH. The Vacuolar segment spans residues 510–520; sequence EATHKATGEYH. A helical transmembrane segment spans residues 521–541; the sequence is FLILYIVVATASILGLFGHLV. Topologically, residues 542 to 611 are cytoplasmic; sequence TSTETSTFVE…IAVSMGYDWS (70 aa). The tract at residues 548–576 is disordered; sequence TFVEGPEDEEDTVDASEATETSPLLPEAS. Positions 552-561 are enriched in acidic residues; the sequence is GPEDEEDTVD. Residues 612–632 traverse the membrane as a helical segment; it reads IQFLLVVPITFFVTFGLAASL. Residues 633–648 are Vacuolar-facing; that stretch reads LDGLHQTPLESEKSAD. Residues 649 to 669 form a helical membrane-spanning segment; sequence FVYTTITAMSVLVGITFLPFV. Over 670-673 the chain is Cytoplasmic; that stretch reads HKLQ. The helical transmembrane segment at 674 to 694 threads the bilayer; that stretch reads VFVPIVVVGVAVTASFVHILS. Over 695–989 the chain is Vacuolar; the sequence is PPFSSNAPAK…LVEVSKYVEL (295 aa). Residues Asn-745, Asn-793, and Asn-822 are each glycosylated (N-linked (GlcNAc...) asparagine).

It belongs to the peptidase M28 family. Requires Zn(2+) as cofactor.

The protein resides in the vacuole membrane. In terms of biological role, may be involved in vacuolar sorting and osmoregulation. The sequence is that of Vacuolar membrane protease from Yarrowia lipolytica (strain CLIB 122 / E 150) (Yeast).